We begin with the raw amino-acid sequence, 1368 residues long: DNA-directed RNA polymerase subunit beta (1368 aa).

It belongs to the RNA polymerase beta chain family. As to quaternary structure, the RNAP catalytic core consists of 2 alpha, 1 beta, 1 beta' and 1 omega subunit. When a sigma factor is associated with the core the holoenzyme is formed, which can initiate transcription.

It carries out the reaction RNA(n) + a ribonucleoside 5'-triphosphate = RNA(n+1) + diphosphate. In terms of biological role, DNA-dependent RNA polymerase catalyzes the transcription of DNA into RNA using the four ribonucleoside triphosphates as substrates. The protein is DNA-directed RNA polymerase subunit beta of Cupriavidus pinatubonensis (strain JMP 134 / LMG 1197) (Cupriavidus necator (strain JMP 134)).